We begin with the raw amino-acid sequence, 334 residues long: Deoxyhypusine synthase (334 aa).

Residues 73–77, 99–101, glutamate 105, and aspartate 207 each bind NAD(+); these read SNIIS and TGG. 104–105 is a spermidine binding site; sequence EE. Positions 212 and 256 each coordinate spermidine. 276–277 lines the NAD(+) pocket; that stretch reads NA. Residues 282 to 284 and 291 to 297 contribute to the spermidine site; these read GSD and EAVSWGK. Catalysis depends on lysine 297, which acts as the Nucleophile. 310 to 311 contacts NAD(+); sequence DA.

The protein belongs to the deoxyhypusine synthase family. It depends on NAD(+) as a cofactor.

The catalysed reaction is [eIF5A protein]-L-lysine + spermidine = [eIF5A protein]-deoxyhypusine + propane-1,3-diamine. It participates in protein modification; eIF5A hypusination. In terms of biological role, catalyzes the NAD-dependent oxidative cleavage of spermidine and the subsequent transfer of the butylamine moiety of spermidine to the epsilon-amino group of a specific lysine residue of the eIF-5A precursor protein to form the intermediate deoxyhypusine residue. The polypeptide is Deoxyhypusine synthase (DYS1) (Encephalitozoon cuniculi (strain GB-M1) (Microsporidian parasite)).